A 124-amino-acid chain; its full sequence is MDFHKIFIEAEKNLVQGFKIKIQNETSMNRNKFLKLFLATFLGEQYFDELDSDNFNDICHDVIDSISLCGEEIYFFHEIVNLHDTHDYVAECINKYQSINNLDKCQLGGSILKCLKASSHLKIL.

This is an uncharacterized protein from Acanthamoeba polyphaga (Amoeba).